A 34-amino-acid polypeptide reads, in one-letter code: uncharacterized protein (34 aa).

Basic and acidic residues predominate over residues 1–12; the sequence is MFSHFEVSENRP. The segment at 1-21 is disordered; the sequence is MFSHFEVSENRPRKQPRRKRI.

This is an uncharacterized protein from Saccharomyces cerevisiae (strain ATCC 204508 / S288c) (Baker's yeast).